The following is a 176-amino-acid chain: Protein GrpE (176 aa).

This sequence belongs to the GrpE family. As to quaternary structure, homodimer.

Its subcellular location is the cytoplasm. Functionally, participates actively in the response to hyperosmotic and heat shock by preventing the aggregation of stress-denatured proteins, in association with DnaK and GrpE. It is the nucleotide exchange factor for DnaK and may function as a thermosensor. Unfolded proteins bind initially to DnaJ; upon interaction with the DnaJ-bound protein, DnaK hydrolyzes its bound ATP, resulting in the formation of a stable complex. GrpE releases ADP from DnaK; ATP binding to DnaK triggers the release of the substrate protein, thus completing the reaction cycle. Several rounds of ATP-dependent interactions between DnaJ, DnaK and GrpE are required for fully efficient folding. The polypeptide is Protein GrpE (Meiothermus ruber).